A 159-amino-acid chain; its full sequence is Insulin-like peptide 7 (159 aa).

An N-terminal signal peptide occupies residues 1–31 (MTRMIIQNSGSWTLCGAVLLFVLPLIPTPEA). 3 disulfide bridges follow: cysteine 63–cysteine 136, cysteine 75–cysteine 150, and cysteine 135–cysteine 141. The propeptide at 90-121 (TGNDEAWIKKTTTEPDGSTWLHVNYANMFLRS) is connecting peptide.

This sequence belongs to the insulin family. In terms of assembly, heterodimer of a B chain and an A chain linked by two disulfide bonds. Broadly expressed at a low level throughout the embryo, except the yolk. Expressed at a moderate level in the embryonic midgut. Larval expression is restricted to ten cells of the ventral nerve cord - in four pairs of centrally located cells in the most posterior abdominal segments and in one pair of dorsally located cells in the A1 or A2 segments.

It localises to the secreted. In terms of biological role, possible ligand of InR/insulin-like receptor. This is Insulin-like peptide 7 from Drosophila melanogaster (Fruit fly).